A 1690-amino-acid chain; its full sequence is DNA-directed RNA polymerase subunit beta' (1690 aa).

Zn(2+)-binding residues include C63, C65, C78, and C81. D753, D755, and D757 together coordinate Mg(2+). Positions 1107, 1295, 1302, and 1305 each coordinate Zn(2+).

It belongs to the RNA polymerase beta' chain family. In terms of assembly, the RNAP catalytic core consists of 2 alpha, 1 beta, 1 beta' and 1 omega subunit. When a sigma factor is associated with the core the holoenzyme is formed, which can initiate transcription. The cofactor is Mg(2+). Zn(2+) serves as cofactor.

The catalysed reaction is RNA(n) + a ribonucleoside 5'-triphosphate = RNA(n+1) + diphosphate. DNA-dependent RNA polymerase catalyzes the transcription of DNA into RNA using the four ribonucleoside triphosphates as substrates. The chain is DNA-directed RNA polymerase subunit beta' from Thermotoga maritima (strain ATCC 43589 / DSM 3109 / JCM 10099 / NBRC 100826 / MSB8).